A 239-amino-acid chain; its full sequence is Glucosamine-6-phosphate deaminase (239 aa).

Aspartate 62 serves as the catalytic Proton acceptor; for enolization step. Asparagine 128 acts as the For ring-opening step in catalysis. Histidine 130 functions as the Proton acceptor; for ring-opening step in the catalytic mechanism. Glutamate 135 serves as the catalytic For ring-opening step.

The protein belongs to the glucosamine/galactosamine-6-phosphate isomerase family. NagB subfamily.

It carries out the reaction alpha-D-glucosamine 6-phosphate + H2O = beta-D-fructose 6-phosphate + NH4(+). It participates in amino-sugar metabolism; N-acetylneuraminate degradation; D-fructose 6-phosphate from N-acetylneuraminate: step 5/5. Its function is as follows. Catalyzes the reversible isomerization-deamination of glucosamine 6-phosphate (GlcN6P) to form fructose 6-phosphate (Fru6P) and ammonium ion. The chain is Glucosamine-6-phosphate deaminase from Lactobacillus acidophilus (strain ATCC 700396 / NCK56 / N2 / NCFM).